The following is a 27-amino-acid chain: Nucleoside diphosphate kinase 2 (27 aa).

Lysine 3 serves as a coordination point for ATP.

Belongs to the NDK family. Mg(2+) is required as a cofactor.

The catalysed reaction is a 2'-deoxyribonucleoside 5'-diphosphate + ATP = a 2'-deoxyribonucleoside 5'-triphosphate + ADP. It catalyses the reaction a ribonucleoside 5'-diphosphate + ATP = a ribonucleoside 5'-triphosphate + ADP. Major role in the synthesis of nucleoside triphosphates other than ATP. The ATP gamma phosphate is transferred to the NDP beta phosphate via a ping-pong mechanism, using a phosphorylated active-site intermediate. The polypeptide is Nucleoside diphosphate kinase 2 (Pseudotsuga menziesii (Douglas-fir)).